Here is a 374-residue protein sequence, read N- to C-terminus: Phosphate acyltransferase (374 aa).

Residues 323-374 (AEMVDPREPESNPRRRTRPLQVYSGSGPEVLPLGSLERTSSRCPEPVEDAQP) are disordered. Over residues 326–335 (VDPREPESNP) the composition is skewed to basic and acidic residues.

This sequence belongs to the PlsX family. Homodimer. Probably interacts with PlsY.

The protein resides in the cytoplasm. It carries out the reaction a fatty acyl-[ACP] + phosphate = an acyl phosphate + holo-[ACP]. It participates in lipid metabolism; phospholipid metabolism. In terms of biological role, catalyzes the reversible formation of acyl-phosphate (acyl-PO(4)) from acyl-[acyl-carrier-protein] (acyl-ACP). This enzyme utilizes acyl-ACP as fatty acyl donor, but not acyl-CoA. The sequence is that of Phosphate acyltransferase from Synechococcus sp. (strain JA-2-3B'a(2-13)) (Cyanobacteria bacterium Yellowstone B-Prime).